A 672-amino-acid chain; its full sequence is Protein seu-1 (672 aa).

Disordered stretches follow at residues 1 to 463 (MSSI…AGTE) and 576 to 672 (LAPP…LKHL). Residues 8 to 20 (NDNRRPTFRDHRT) are compositionally biased toward basic and acidic residues. The segment covering 25-34 (GRGGSGGGGR) has biased composition (gly residues). The span at 62–85 (RSQDHRQRSPEVRRHRSPEKESKD) shows a compositional bias: basic and acidic residues. Positions 87-105 (VVTSTGSSRGATSASVTSS) are enriched in low complexity. Basic and acidic residues-rich tracts occupy residues 107–138 (RRHE…DADR), 189–226 (VSRH…KSNG), 234–268 (RRRE…KVED), and 289–306 (EQAK…ESHQ). A compositionally biased stretch (low complexity) spans 307–317 (SAHSAAVSNAS). Over residues 322–343 (SEEELDYEEDDIDVDLDGDIDV) the composition is skewed to acidic residues. 6 stretches are compositionally biased toward basic and acidic residues: residues 366 to 375 (NDVKDETMEE), 382 to 396 (PEKK…DDKD), 410 to 424 (RRED…SDHH), 436 to 447 (RATDHKESRRSE), 607 to 626 (SFGD…RHMD), and 636 to 659 (DHRV…ERGF).

In terms of tissue distribution, highly expressed in intestinal cells, lateral hypodermal (seam) cells, Pn.p ventral hypodermal cells, and spermatheca. Expressed at low levels in the ventral nerve cord.

Its subcellular location is the nucleus. Together with unc-5, involved in touch neuron axon guidance. During gonad morphogenesis, plays a role in the unc-5-/unc-6-mediated migration of distal tip cells along the body. The protein is Protein seu-1 of Caenorhabditis elegans.